Consider the following 131-residue polypeptide: Predicted GPI-anchored protein 26 (131 aa).

The signal sequence occupies residues methionine 1 to alanine 18. Residues asparagine 22 and asparagine 104 are each glycosylated (N-linked (GlcNAc...) asparagine). A lipid anchor (GPI-anchor amidated glycine) is attached at glycine 110. Positions alanine 111–methionine 131 are cleaved as a propeptide — removed in mature form.

The protein resides in the cell membrane. GPI-anchored protein involved in proper cell wall integrity. Does not seem to be directly involved in the synthesis of the cell wall. Required for normal virulence in a mouse model of disseminated candidiasis. In Candida albicans (strain SC5314 / ATCC MYA-2876) (Yeast), this protein is Predicted GPI-anchored protein 26 (PGA26).